The primary structure comprises 108 residues: Cuticle protein AM1199 (108 aa).

Residue Q1 is modified to Pyrrolidone carboxylic acid. Residues 26-91 form the Chitin-binding type R&amp;R domain; the sequence is DGNFGYDFET…AESPLIPTPH (66 aa). The O-linked (HexNAc) threonine glycan is linked to T89.

As to expression, arthrodial membrane.

This Cancer pagurus (Rock crab) protein is Cuticle protein AM1199.